The following is a 682-amino-acid chain: Tail-specific protease (682 aa).

The first 22 residues, 1-22 (MNMFFRLTALAGLLAIAGQTFA), serve as a signal peptide directing secretion. One can recognise a PDZ domain in the interval 238–322 (NTEMSLSLEG…SKVRLEILPA (85 aa)). Catalysis depends on charge relay system residues S452, D463, and K477. The segment covering 635–650 (GKPELKKLDDLPKDYQ) has biased composition (basic and acidic residues). Residues 635–654 (GKPELKKLDDLPKDYQEPDP) form a disordered region.

Belongs to the peptidase S41A family.

The protein localises to the cell inner membrane. It catalyses the reaction The enzyme shows specific recognition of a C-terminal tripeptide, Xaa-Yaa-Zaa, in which Xaa is preferably Ala or Leu, Yaa is preferably Ala or Tyr, and Zaa is preferably Ala, but then cleaves at a variable distance from the C-terminus. A typical cleavage is -Ala-Ala-|-Arg-Ala-Ala-Lys-Glu-Asn-Tyr-Ala-Leu-Ala-Ala.. Its function is as follows. Involved in the cleavage of a C-terminal peptide of 11 residues from the precursor form of penicillin-binding protein 3 (PBP3). May be involved in protection of the bacterium from thermal and osmotic stresses. The sequence is that of Tail-specific protease (prc) from Escherichia coli (strain K12).